The sequence spans 181 residues: Adenine phosphoribosyltransferase (181 aa).

This sequence belongs to the purine/pyrimidine phosphoribosyltransferase family. As to quaternary structure, homodimer.

It localises to the cytoplasm. It carries out the reaction AMP + diphosphate = 5-phospho-alpha-D-ribose 1-diphosphate + adenine. It functions in the pathway purine metabolism; AMP biosynthesis via salvage pathway; AMP from adenine: step 1/1. Its function is as follows. Catalyzes a salvage reaction resulting in the formation of AMP, that is energically less costly than de novo synthesis. This is Adenine phosphoribosyltransferase from Shewanella loihica (strain ATCC BAA-1088 / PV-4).